The chain runs to 573 residues: Delta 8-(E)-sphingolipid desaturase (573 aa).

The 76-residue stretch at 2-77 (SRVLSRRDIA…FKIWKIGRID (76 aa)) folds into the Cytochrome b5 heme-binding domain. Positions 37 and 60 each coordinate heme. Residues 228-248 (LFGISFYLLSLKWFAISAICL) form a helical membrane-spanning segment. The short motif at 260 to 264 (HDAGH) is the Histidine box-1 element. The helical transmembrane segment at 273–293 (VDNIIGMTVASWIGGLSLGWW) threads the bilayer. A Histidine box-2 motif is present at residues 297 to 301 (HDVHH). Transmembrane regions (helical) follow at residues 353–372 (YLYY…LSWM), 393–413 (LAEL…KQMP), and 422–442 (VMIS…SHFA). The short motif at 481–485 (QVIHH) is the Histidine box-3 element.

It belongs to the fatty acid desaturase type 1 family.

It is found in the membrane. The catalysed reaction is an N-acylsphing-4-enine + 2 Fe(II)-[cytochrome b5] + O2 + 2 H(+) = a (4E,8E)-4-sphinga-4,8-dienine ceramide + 2 Fe(III)-[cytochrome b5] + 2 H2O. The protein operates within lipid metabolism; sphingolipid metabolism. Functionally, delta(8)-fatty-acid desaturase which introduces a double bond at the 8-position in the long-chain base (LCB) of ceramides. Required for the formation of the di-unsaturated sphingoid base (E,E)-sphinga-4,8-dienine during glucosylceramide (GluCer) biosynthesis. This is Delta 8-(E)-sphingolipid desaturase from Kluyveromyces lactis (Yeast).